We begin with the raw amino-acid sequence, 508 residues long: Abl interactor 1 (508 aa).

At A2 the chain carries N-acetylalanine. A required for binding to WASF1 region spans residues 18–79 (ALIESYQNLT…NNVLQLLDIQ (62 aa)). The t-SNARE coiled-coil homology domain maps to 45 to 107 (KALEETKAYT…DIHKEKVARR (63 aa)). At Y53 the chain carries Phosphotyrosine. Disordered stretches follow at residues 159 to 290 (KHGN…APPL), 306 to 375 (APGS…LTPQ), and 388 to 421 (NIAD…PVDY). Residues 161 to 175 (GNNQPARTGTLSRTN) show a composition bias toward polar residues. Phosphothreonine is present on residues T174 and T178. A phosphoserine mark is found at S183 and S187. Position 213 is a phosphotyrosine; by ABL1 (Y213). Position 215 is a phosphothreonine (T215). Residues S216, S222, and S225 each carry the phosphoserine modification. Polar residues predominate over residues 222–235 (SQHSPGRTASLNQR). Positions 248–258 (SRENSGSSSIG) are enriched in low complexity. Positions 278–290 (VPPPSGAPPAPPL) are enriched in pro residues. Residues 307–322 (PGSQYGTMTRQISRHN) show a composition bias toward polar residues. Phosphoserine occurs at positions 319 and 323. The segment covering 337–347 (PSVTAQFSAQP) has biased composition (polar residues). Composition is skewed to pro residues over residues 393-403 (PTPPPPPPPDD) and 410-419 (SPPPPPPPPV). An SH3 domain is found at 446–505 (NYIEKVVAIYDYTKDKDDELSFMEGAIIYVIKKNDDGWYEGVCNRVTGLFPGNYVESIMH). A Phosphotyrosine modification is found at Y455. S466 carries the post-translational modification Phosphoserine. Phosphothreonine is present on T507.

Belongs to the ABI family. Interacts with ABL1, ENAH, STX1A, SNAP25, VAMP2, EPS8, and through its N-terminus with WASF1. Part of a complex consisting of ABI1, STX1A and SNAP25. Part of a complex consisting of ABI1, EPS8 and SOS1. Interacts with SOS1, SOS2, GRB2, SPTA1 and the first SH3 domain of NCK1. Isoform 6 does not interact with NCK1. Component of the WAVE2 complex composed of ABI1, CYFIP1/SRA1, NCKAP1/NAP1 (NCKAP1l/HEM1 in hematopoietic cells) and WASF2/WAVE2. Interacts (via SH3 domain) with SHANK2 and SHANK3, but not SHANK1; the interaction is direct. Interacts with the heterodimer MYC:MAX; the interaction may enhance MYC:MAX transcriptional activity. Interacts with FNBP1L (via the SH3 domain), WASF2, and CDC42, but only in the presence of FNBP1L. In terms of assembly, (Microbial infection) Interacts with human cytomegalovirus/HHV-5 protein UL135. Phosphorylated on tyrosine residues after serum stimulation or induction by v-Abl. Seems to be phosphorylated at Tyr-53 by ABL1, required for nuclear but not for synaptic localization. As to expression, widely expressed, with highest expression in brain.

The protein localises to the cytoplasm. The protein resides in the nucleus. It is found in the cell projection. It localises to the lamellipodium. Its subcellular location is the filopodium. The protein localises to the growth cone. The protein resides in the postsynaptic density. It is found in the cytoskeleton. May act in negative regulation of cell growth and transformation by interacting with nonreceptor tyrosine kinases ABL1 and/or ABL2. May play a role in regulation of EGF-induced Erk pathway activation. Involved in cytoskeletal reorganization and EGFR signaling. Together with EPS8 participates in transduction of signals from Ras to Rac. In vitro, a trimeric complex of ABI1, EPS8 and SOS1 exhibits Rac specific guanine nucleotide exchange factor (GEF) activity and ABI1 seems to act as an adapter in the complex. Regulates ABL1/c-Abl-mediated phosphorylation of ENAH. Recruits WASF1 to lamellipodia and there seems to regulate WASF1 protein level. In brain, seems to regulate the dendritic outgrowth and branching as well as to determine the shape and number of synaptic contacts of developing neurons. In Homo sapiens (Human), this protein is Abl interactor 1.